The following is a 174-amino-acid chain: FAD synthase (174 aa).

ATP is bound by residues 34-35 (TF), 39-42 (HPGH), Asp119, and Tyr147.

The protein belongs to the archaeal FAD synthase family. In terms of assembly, homodimer. A divalent metal cation serves as cofactor.

The catalysed reaction is FMN + ATP + H(+) = FAD + diphosphate. Its pathway is cofactor biosynthesis; FAD biosynthesis; FAD from FMN: step 1/1. Functionally, catalyzes the transfer of the AMP portion of ATP to flavin mononucleotide (FMN) to produce flavin adenine dinucleotide (FAD) coenzyme. In Methanococcus voltae (strain ATCC BAA-1334 / A3), this protein is FAD synthase.